We begin with the raw amino-acid sequence, 461 residues long: SWM histone demethylase complex subunit phf1 (461 aa).

The tract at residues 79–130 (PYGGMTMPASSSSGATSVPPEQDPSLSVSFNRLPKSASTKTKNGRIRSSRRE) is disordered. A compositionally biased stretch (polar residues) spans 102–119 (PSLSVSFNRLPKSASTKT). Residues 190 to 246 (VTLCSVCQRGHSPLSNRIVFCDGCNSPYHQLCHHPPIDDATVQDVDAEWFCMKCQYR) form a PHD-type zinc finger.

In terms of assembly, component of the SWM histone demethylase complex composed of at least lsd1, lsd2, phf1 and phf2.

It localises to the nucleus. Functionally, component of the SWM histone demethylase complex that specifically demethylates H3K9me2, a specific tag for epigenetic transcriptional activation, thereby acting as a corepressor. Has a role in regulating heterochromatin propagation and euchromatic transcription. This Schizosaccharomyces pombe (strain 972 / ATCC 24843) (Fission yeast) protein is SWM histone demethylase complex subunit phf1 (phf1).